The sequence spans 278 residues: Protein mtd-1 (278 aa).

Residues 1-17 (MRSSLLLLVFFLSIGWA) form the signal peptide. The Extracellular portion of the chain corresponds to 18 to 254 (RYCVHNEKSW…EMLEEIEARK (237 aa)). Asn40, Asn73, Asn163, and Asn190 each carry an N-linked (GlcNAc...) asparagine glycan. A helical membrane pass occupies residues 255–271 (VPVDSSAPVNIILSIAF). Residues 272–278 (SIFLIHF) lie on the Cytoplasmic side of the membrane.

The protein resides in the cell membrane. In terms of biological role, plays a role in mechanosensory transduction (touch sensitivity). This Caenorhabditis elegans protein is Protein mtd-1.